Here is a 322-residue protein sequence, read N- to C-terminus: Probable L-asparaginase (322 aa).

Residues 6 to 320 (PRLALIHTGG…EDIRRVFTQG (315 aa)) form the Asparaginase/glutaminase domain. Positions 13 to 37 (TGGTIASRPSPDGRGLTPQTPPALP) are disordered. The active-site O-isoaspartyl threonine intermediate is threonine 16. Substrate-binding positions include serine 54 and 85-86 (TD).

The protein belongs to the asparaginase 1 family.

The protein localises to the cytoplasm. The enzyme catalyses L-asparagine + H2O = L-aspartate + NH4(+). The sequence is that of Probable L-asparaginase (ansA) from Deinococcus radiodurans (strain ATCC 13939 / DSM 20539 / JCM 16871 / CCUG 27074 / LMG 4051 / NBRC 15346 / NCIMB 9279 / VKM B-1422 / R1).